Consider the following 298-residue polypeptide: Tyrosine recombinase XerC (298 aa).

The region spanning 2-88 is the Core-binding (CB) domain; it reads TDLHTDVERY…ALRSFFDWLV (87 aa). Residues 109-288 form the Tyr recombinase domain; it reads HLPKNIDVDD…DFQHLASVYD (180 aa). Active-site residues include R148, K172, H240, R243, and H266. Y275 serves as the catalytic O-(3'-phospho-DNA)-tyrosine intermediate.

This sequence belongs to the 'phage' integrase family. XerC subfamily. Forms a cyclic heterotetrameric complex composed of two molecules of XerC and two molecules of XerD, in which XerC interacts with XerD via its C-terminal region, XerD interacts with XerC via its C-terminal region and so on.

The protein localises to the cytoplasm. FtsK may regulate the catalytic switch between XerC and XerD in the heterotetrameric complex during the two steps of the recombination process. Functionally, site-specific tyrosine recombinase, which acts by catalyzing the cutting and rejoining of the recombining DNA molecules. Binds cooperatively to specific DNA consensus sequences that are separated from XerD binding sites by a short central region, forming the heterotetrameric XerC-XerD complex that recombines DNA substrates. The complex is essential to convert dimers of the bacterial chromosome into monomers to permit their segregation at cell division. It also contributes to the segregational stability of plasmids. In the complex XerC specifically exchanges the top DNA strands. The sequence is that of Tyrosine recombinase XerC from Escherichia coli O6:K15:H31 (strain 536 / UPEC).